The chain runs to 353 residues: Methylthioribose-1-phosphate isomerase (353 aa).

Residues 51 to 53, arginine 94, and glutamine 199 contribute to the substrate site; that span reads RGA. Catalysis depends on aspartate 240, which acts as the Proton donor. Residue 250–251 coordinates substrate; the sequence is NK.

This sequence belongs to the EIF-2B alpha/beta/delta subunits family. MtnA subfamily. As to quaternary structure, homodimer.

It carries out the reaction 5-(methylsulfanyl)-alpha-D-ribose 1-phosphate = 5-(methylsulfanyl)-D-ribulose 1-phosphate. It functions in the pathway amino-acid biosynthesis; L-methionine biosynthesis via salvage pathway; L-methionine from S-methyl-5-thio-alpha-D-ribose 1-phosphate: step 1/6. Functionally, catalyzes the interconversion of methylthioribose-1-phosphate (MTR-1-P) into methylthioribulose-1-phosphate (MTRu-1-P). The protein is Methylthioribose-1-phosphate isomerase of Bacillus cereus (strain ATCC 14579 / DSM 31 / CCUG 7414 / JCM 2152 / NBRC 15305 / NCIMB 9373 / NCTC 2599 / NRRL B-3711).